A 140-amino-acid chain; its full sequence is Large ribosomal subunit protein uL14 (140 aa).

The protein belongs to the universal ribosomal protein uL14 family. As to quaternary structure, component of the large ribosomal subunit.

It localises to the cytoplasm. Component of the large ribosomal subunit. The ribosome is a large ribonucleoprotein complex responsible for the synthesis of proteins in the cell. The sequence is that of Large ribosomal subunit protein uL14 (rpl23) from Danio rerio (Zebrafish).